Reading from the N-terminus, the 367-residue chain is Probable dual-specificity RNA methyltransferase RlmN (367 aa).

The Proton acceptor role is filled by Glu92. The Radical SAM core domain maps to 98–326 (QEYGLSVCVT…YDTLKKNGIN (229 aa)). Cys105 and Cys341 form a disulfide bridge. Residues Cys112, Cys116, and Cys119 each contribute to the [4Fe-4S] cluster site. Residues 164–165 (GE), Ser196, 219–221 (SLH), and Asn297 each bind S-adenosyl-L-methionine. The active-site S-methylcysteine intermediate is the Cys341.

Belongs to the radical SAM superfamily. RlmN family. The cofactor is [4Fe-4S] cluster.

The protein resides in the cytoplasm. The catalysed reaction is adenosine(2503) in 23S rRNA + 2 reduced [2Fe-2S]-[ferredoxin] + 2 S-adenosyl-L-methionine = 2-methyladenosine(2503) in 23S rRNA + 5'-deoxyadenosine + L-methionine + 2 oxidized [2Fe-2S]-[ferredoxin] + S-adenosyl-L-homocysteine. The enzyme catalyses adenosine(37) in tRNA + 2 reduced [2Fe-2S]-[ferredoxin] + 2 S-adenosyl-L-methionine = 2-methyladenosine(37) in tRNA + 5'-deoxyadenosine + L-methionine + 2 oxidized [2Fe-2S]-[ferredoxin] + S-adenosyl-L-homocysteine. Functionally, specifically methylates position 2 of adenine 2503 in 23S rRNA and position 2 of adenine 37 in tRNAs. The sequence is that of Probable dual-specificity RNA methyltransferase RlmN from Listeria innocua serovar 6a (strain ATCC BAA-680 / CLIP 11262).